A 300-amino-acid polypeptide reads, in one-letter code: GTP-binding protein At2g22870 (300 aa).

The 179-residue stretch at 119–297 (DRPEIAILGR…LLHMSQLRNY (179 aa)) folds into the EngB-type G domain. GTP is bound by residues 127–134 (GRSNVGKS), 154–158 (GKTQL), 172–175 (DLPG), 239–242 (TKCD), and 276–278 (TSS). Mg(2+) is bound by residues S134 and T156.

It belongs to the TRAFAC class TrmE-Era-EngA-EngB-Septin-like GTPase superfamily. EngB GTPase family. Mg(2+) serves as cofactor.

This Arabidopsis thaliana (Mouse-ear cress) protein is GTP-binding protein At2g22870 (EMB2001).